A 508-amino-acid polypeptide reads, in one-letter code: Dihydroniloticin synthase CYP71CD4 (508 aa).

Residues leucine 6–tryptophan 26 form a helical membrane-spanning segment. Cysteine 449 serves as a coordination point for heme.

The protein belongs to the cytochrome P450 family. Requires heme as cofactor. In terms of tissue distribution, mainly expressed in roots and, to a lesser extent, in stems.

It is found in the membrane. The enzyme catalyses tirucalla-7,24-dien-3beta-ol + 2 reduced [NADPH--hemoprotein reductase] + 2 O2 = dihydroniloticin + 2 oxidized [NADPH--hemoprotein reductase] + 2 H2O + 2 H(+). It participates in secondary metabolite biosynthesis; terpenoid biosynthesis. In terms of biological role, monooxygenase involved in the biosynthesis of quassinoids triterpene natural products such as ailanthone, chaparrinone, glaucarubinone and amarolide, allelopathic degraded triterpene lactones inhibiting the growth of other plants, and possessing antimalarial, antifeedant, insecticidal, anti-inflammatory and anticancer activities. Catalyzes the conversion of tirucalladienol to dihydroniloticin. The sequence is that of Dihydroniloticin synthase CYP71CD4 from Ailanthus altissima (Tree-of-heaven).